The sequence spans 450 residues: Phosphoglucosamine mutase (450 aa).

Ser-102 (phosphoserine intermediate) is an active-site residue. Positions 102, 244, 246, and 248 each coordinate Mg(2+). At Ser-102 the chain carries Phosphoserine.

The protein belongs to the phosphohexose mutase family. Mg(2+) serves as cofactor. In terms of processing, activated by phosphorylation.

The catalysed reaction is alpha-D-glucosamine 1-phosphate = D-glucosamine 6-phosphate. Catalyzes the conversion of glucosamine-6-phosphate to glucosamine-1-phosphate. The chain is Phosphoglucosamine mutase from Bartonella bacilliformis (strain ATCC 35685 / KC583 / Herrer 020/F12,63).